Here is a 413-residue protein sequence, read N- to C-terminus: Alpha-1-antitrypsin 1-5 (413 aa).

A signal peptide spans 1–24; the sequence is MTPSISWCLLLLAGLCCLVPSFLA. N-linked (GlcNAc...) asparagine glycans are attached at residues asparagine 64, asparagine 101, and asparagine 265. An RCL region spans residues 368–387; the sequence is AATVLQGGFLSMPPILHFNR.

It belongs to the serpin family.

It localises to the secreted. In terms of biological role, does not inhibit elastase or chymotrypsin. No target protease has been identified to date. This Mus musculus (Mouse) protein is Alpha-1-antitrypsin 1-5 (Serpina1e).